The following is a 494-amino-acid chain: Ribose import ATP-binding protein RbsA (494 aa).

ABC transporter domains are found at residues 2-239 (IDMR…VGRQ) and 251-493 (IGEE…TGGN). 34–41 (GENGAGKS) is a binding site for ATP.

This sequence belongs to the ABC transporter superfamily. Ribose importer (TC 3.A.1.2.1) family. In terms of assembly, the complex is composed of an ATP-binding protein (RbsA), two transmembrane proteins (RbsC) and a solute-binding protein (RbsB).

Its subcellular location is the cell membrane. The enzyme catalyses D-ribose(out) + ATP + H2O = D-ribose(in) + ADP + phosphate + H(+). Functionally, part of the ABC transporter complex RbsABC involved in ribose import. Responsible for energy coupling to the transport system. The sequence is that of Ribose import ATP-binding protein RbsA from Geobacillus kaustophilus (strain HTA426).